The following is a 429-amino-acid chain: MTSYSLFWMSLLKNNWKPISNDFVICLWTLAVTFIRIYWIFFVPLEWKKDLDNEKWSFLRKTENVVCYNHKRDTINRLRKLKIQKIIELPPPYPNGWYGILKSSQLKAGEATCVSCLGEDLVIFRSKKDIVFILDAYCPHLGANLGIGGSVADDCVICPFHQWKFRGTDGLCINIPYSTSVPKGSKLKKWISQEVDGFIFIWYHAEQTELPWDLPVPMGEIDDTFVYHGHNEFYINCHIQEIPENGADIAHFNAIHKKNFINGSWAQKKRLFGLGSHHWKARWSPFTGKLKYLAEVNLSHTFKLFGKFGCFRMEVSGKQIGPSIVCLEVNSYTFGKIKVFQYITPIEPMLQKVVHEFYGPRWIAPLMKIFIYGESLMFERDIKIWNHKVFNRNPILAKEDASIKKFRLWFSQFYSSNSKIYSEATNIGW.

A helical membrane pass occupies residues 23–43 (FVICLWTLAVTFIRIYWIFFV). Positions 98–201 (YGILKSSQLK…SQEVDGFIFI (104 aa)) constitute a Rieske domain. Positions 138, 140, 158, and 161 each coordinate [2Fe-2S] cluster.

This sequence belongs to the cholesterol 7-desaturase family. [2Fe-2S] cluster is required as a cofactor. As to expression, expressed predominantly in the prothoracic gland and weakly in brain and malpighian tubules.

Its subcellular location is the membrane. The catalysed reaction is cholesterol + NADPH + O2 + H(+) = 7-dehydrocholesterol + NADP(+) + 2 H2O. It carries out the reaction cholesterol + NADH + O2 + H(+) = 7-dehydrocholesterol + NAD(+) + 2 H2O. It participates in steroid hormone biosynthesis; dafachronic acid biosynthesis. In terms of biological role, catalyzes the production of 7-dehydrocholesterol (7-DHC or cholesta-5,7-dien-3beta-ol) by inserting a double bond (desaturating) at the C7-C8 single bond of cholesterol. Essential regulator of steroid biosynthesis, as this reaction is the first step in the synthesis of the steroid hormone Delta(7)-dafachronic acid. Required for insect molting, metamorphosis and body growth throughout development via the regulation of ecdysteroid biosynthesis in the prothoracic gland. In Drosophila melanogaster (Fruit fly), this protein is Cholesterol 7-desaturase nvd.